The chain runs to 61 residues: Metallothionein-1E (61 aa).

Met1 is subject to N-acetylmethionine. The beta stretch occupies residues 1–29 (MDPNCSCATGGSCTCAGSCKCKECKCTSC). A divalent metal cation is bound by residues Cys5, Cys7, Cys13, Cys15, Cys19, Cys21, Cys24, Cys26, Cys29, Cys33, Cys34, Cys36, Cys37, Cys41, Cys44, Cys48, Cys50, Cys57, Cys59, and Cys60. Positions 30 to 61 (KKSCCSCCPVGCAKCAQGCVCKGASEKCSCCA) are alpha.

Belongs to the metallothionein superfamily. Type 1 family. As to quaternary structure, monomer.

Its function is as follows. Metallothioneins have a high content of cysteine residues that bind various heavy metals; these proteins are transcriptionally regulated by both heavy metals and glucocorticoids. The chain is Metallothionein-1E (MT1E) from Homo sapiens (Human).